The chain runs to 209 residues: Protein GrpE (209 aa).

Composition is skewed to basic and acidic residues over residues Met-1–Ser-16 and Lys-34–Lys-44. The disordered stretch occupies residues Met-1–Glu-61.

The protein belongs to the GrpE family. Homodimer.

The protein localises to the cytoplasm. Participates actively in the response to hyperosmotic and heat shock by preventing the aggregation of stress-denatured proteins, in association with DnaK and GrpE. It is the nucleotide exchange factor for DnaK and may function as a thermosensor. Unfolded proteins bind initially to DnaJ; upon interaction with the DnaJ-bound protein, DnaK hydrolyzes its bound ATP, resulting in the formation of a stable complex. GrpE releases ADP from DnaK; ATP binding to DnaK triggers the release of the substrate protein, thus completing the reaction cycle. Several rounds of ATP-dependent interactions between DnaJ, DnaK and GrpE are required for fully efficient folding. The chain is Protein GrpE from Methanosarcina acetivorans (strain ATCC 35395 / DSM 2834 / JCM 12185 / C2A).